A 207-amino-acid polypeptide reads, in one-letter code: Ribosome maturation factor RimP (207 aa).

It belongs to the RimP family.

It is found in the cytoplasm. Functionally, required for maturation of 30S ribosomal subunits. The protein is Ribosome maturation factor RimP of Parvibaculum lavamentivorans (strain DS-1 / DSM 13023 / NCIMB 13966).